The sequence spans 227 residues: (S)-2-haloacid dehalogenase (227 aa).

The active-site Nucleophile is the Asp-10. An (S)-2-haloacid is bound by residues 11 to 12, Arg-41, and 118 to 119; these read LY and SN. Residues 175–180 are important for catalytic activity; sequence SSNAWD.

The protein belongs to the HAD-like hydrolase superfamily. S-2-haloalkanoic acid dehalogenase family. In terms of assembly, homotetramer.

It catalyses the reaction an (S)-2-haloacid + H2O = a (2R)-2-hydroxycarboxylate + a halide anion + H(+). It carries out the reaction (S)-2-chloropropanoate + H2O = (R)-lactate + chloride + H(+). Catalyzes the hydrolytic dehalogenation of small (S)-2-haloalkanoic acids to yield the corresponding (R)-2-hydroxyalkanoic acids. Acts on acids of short chain lengths, C(2) to C(4), with inversion of configuration at C-2. Active with 2-halogenated carboxylic acids and converts only the S-isomer (or L-isomer) of 2-chloropropionic acid with inversion of configuration to produce R-lactate (or D-isomer). This is (S)-2-haloacid dehalogenase from Pseudomonas putida (Arthrobacter siderocapsulatus).